The sequence spans 514 residues: Probable WRKY transcription factor 4 (514 aa).

3 disordered regions span residues 1–28 (MSEK…PPRP), 175–204 (QPQT…PLPA), and 278–394 (YKGQ…TVTE). Composition is skewed to polar residues over residues 185 to 198 (QVQS…QIPT) and 286 to 299 (PPQN…DNTA). A DNA-binding region (WRKY 1) is located at residues 223–287 (NVDKPADDGY…YKGQHNHEPP (65 aa)). The segment covering 300-313 (NINGSSINNNRGSS) has biased composition (low complexity). Residues 315-326 (LGASQFQTNSSN) show a composition bias toward polar residues. Basic and acidic residues predominate over residues 359–380 (TDVREKDENEPDPKRRSTEVRI). A DNA-binding region (WRKY 2) is located at residues 403–468 (SEVDLLDDGY…YEGKHNHDLP (66 aa)). Zn(2+)-binding residues include Cys434, Thr436, Cys439, His463, and His465. The segment at 464–514 (NHDLPAAKSSSHAAAAAQLRPDNRPGGLANLNQQQQQQPVARLRLKEEQTT) is disordered. Residues 469–480 (AAKSSSHAAAAA) are compositionally biased toward low complexity.

In terms of tissue distribution, in young, mature and senescent leaves.

It is found in the nucleus. Its function is as follows. Transcription factor that binds specifically to the W box (5'-(T)TGAC[CT]-3'), a frequently occurring elicitor-responsive cis-acting element. Has a positive role in resistance to necrotrophic pathogens (e.g. Botrytis cinerea), but a negative effect on plant resistance to biotrophic pathogens (e.g. Pseudomonas syringae). The chain is Probable WRKY transcription factor 4 (WRKY4) from Arabidopsis thaliana (Mouse-ear cress).